We begin with the raw amino-acid sequence, 258 residues long: Isoprenyl transferase 2 (258 aa).

Residue aspartate 35 is part of the active site. Aspartate 35 is a binding site for Mg(2+). Residues glycine 36–arginine 39, tryptophan 40, arginine 50, and serine 81–aspartate 83 each bind substrate. Asparagine 84 acts as the Proton acceptor in catalysis. Substrate contacts are provided by residues arginine 87, arginine 207, and arginine 213–serine 215. Residue glutamate 226 coordinates Mg(2+).

The protein belongs to the UPP synthase family. Homodimer. The cofactor is Mg(2+).

Catalyzes the condensation of isopentenyl diphosphate (IPP) with allylic pyrophosphates generating different type of terpenoids. This Streptomyces coelicolor (strain ATCC BAA-471 / A3(2) / M145) protein is Isoprenyl transferase 2.